A 545-amino-acid chain; its full sequence is Cytochrome P450 monooxygenase sdnB (545 aa).

An N-linked (GlcNAc...) asparagine glycan is attached at Asn5. Residues Ser30–Tyr50 traverse the membrane as a helical segment. The N-linked (GlcNAc...) asparagine glycan is linked to Asn276. Residues Leu322 to Ser342 traverse the membrane as a helical segment. Residues Asn393 and Asn476 are each glycosylated (N-linked (GlcNAc...) asparagine). Cys486 contacts heme.

The protein belongs to the cytochrome P450 family. Heme serves as cofactor.

It is found in the membrane. It functions in the pathway antibiotic biosynthesis. Cytochrome P450 monooxygenase; part of the gene cluster that mediates the biosynthesis of sordarin and hypoxysordarin, glycoside antibiotics with a unique tetracyclic diterpene aglycone structure. First, the geranylgeranyl diphosphate synthase sdnC constructs GGDP from farnesyl diphosphate and isopentenyl diphosphate. The diterpene cyclase sdnA then catalyzes the cyclization of GGDP to afford cycloaraneosene. Cycloaraneosene is then hydroxylated four times by the putative cytochrome P450 monooxygenases sdnB, sdnE, sdnF and sdnH to give a hydroxylated cycloaraneosene derivative such as cycloaraneosene-8,9,13,19-tetraol. Although the order of the hydroxylations is unclear, at least C8, C9 and C13 of the cycloaraneosene skeleton are hydroxylated before the sordaricin formation. Dehydration of the 13-hydroxy group of the hydroxylated cycloaraneosene derivative might be catalyzed by an unassigned hypothetical protein such as sdnG and sdnP to construct the cyclopentadiene moiety. The FAD-dependent oxidoreductase sdnN is proposed to catalyze the oxidation at C9 of the hydroxylated cycloaraneosene derivative and also catalyze the Baeyer-Villiger oxidation to give the lactone intermediate. The presumed lactone intermediate would be hydrolyzed to give an acrolein moiety and a carboxylate moiety. Then, [4+2]cycloaddition would occur between the acrolein moiety and the cyclopentadiene moiety to give sordaricin. SdnN might also be involved in the [4+2]cycloaddition after the hypothesized oxidation to accommodate the oxidized product and prompt the [4+2]cycloaddition. GDP-6-deoxy-D-altrose may be biosynthesized from GDP-D-mannose by the putative GDP-mannose-4,6-dehydratase sdnI and the short-chain dehydrogenase sdnK. The glycosyltransferase sdnJ catalyzes the attachment of 6-deoxy-D-altrose onto the 19-hydroxy group of sordaricin to give 4'-O-demethylsordarin. The methyltransferase sdnD would complete the biosynthesis of sordarin. Sordarin can be further modified into hypoxysordarin. The unique acyl chain at the 3'-hydroxy group of hypoxysordarin would be constructed by an iterative type I PKS sdnO and the trans-acting polyketide methyltransferase sdnL. SdnL would be responsible for the introduction of an alpha-methyl group of the polyketide chain. Alternatively, the beta-lactamase-like protein sdnR might be responsible for the cleavage and transfer of the polyketide chain from the PKS sdnO to sordarin. Two putative cytochrome P450 monooxygenases, sdnQ and sdnT, might catalyze the epoxidations of the polyketide chain to complete the biosynthesis of hypoxysordarin. Transcriptional regulators sdnM and sdnS are presumably encoded for the transcriptional regulation of the expression of the sdn gene cluster. This Sordaria araneosa (Pleurage araneosa) protein is Cytochrome P450 monooxygenase sdnB.